We begin with the raw amino-acid sequence, 151 residues long: UPF0178 protein Caul_3070 (151 aa).

Belongs to the UPF0178 family.

The polypeptide is UPF0178 protein Caul_3070 (Caulobacter sp. (strain K31)).